A 323-amino-acid chain; its full sequence is Serine/threonine-protein phosphatase PP1-gamma catalytic subunit (323 aa).

Ala-2 bears the N-acetylalanine mark. Residues Asp-64, His-66, Asp-92, and Asn-124 each contribute to the Mn(2+) site. The active-site Proton donor is His-125. Mn(2+) is bound by residues His-173 and His-248. 2 positions are modified to phosphothreonine: Thr-307 and Thr-311.

It belongs to the PPP phosphatase family. PP-1 subfamily. In terms of assembly, PP1 comprises a catalytic subunit, PPP1CA, PPP1CB or PPP1CC, which is folded into its native form by inhibitor 2 and glycogen synthetase kinase 3, and then complexed to one or several targeting or regulatory subunits. PPP1R12A, PPP1R12B and PPP1R12C mediate binding to myosin. PPP1R3A (in skeletal muscle), PPP1R3B (in liver), PPP1R3C, PPP1R3D and PPP1R3F (in brain) mediate binding to glycogen. PPP1R15A and PPP1R15B mediate binding to EIF2S1. Part of a complex containing PPP1R15B, PP1 and NCK1/2. Interacts with PPP1R3B, PPP1R7 and CDCA2. Interacts with IKFZ1; the interaction targets PPP1CC to pericentromeric heterochromatin, dephosphorylates IKAROS, stabilizes it and prevents it from degradation. Interacts with NOM1 and PPP1R8. Component of the PTW/PP1 phosphatase complex, composed of PPP1R10/PNUTS, TOX4, WDR82, and PPP1CA or PPP1CB or PPP1CC. Interacts with PPP1R8. Interacts with NEK2. Interacts with PPP1R42; the interaction is direct. Interacts with URI1; the interaction is phosphorylation-dependent and occurs in a growth factor-dependent manner. Interacts with FOXP3. Interacts with TMEM225 (via RVxF motif). Interacts with MKI67. Interacts with RRP1B; this targets PPP1CC to the nucleolus. Interacts with DYNLT4. Interacts (via RVxF motif) with FIRRM; regulates PLK1 kinase activity. Interacts with the KNL1 complex subunit KNL1; the interaction is direct and mutually exclusive with KNL1 binding to microtubules. Component of the SHOC2-MRAS-PP1c (SMP) complex consisting of SHOC2, GTP-bound M-Ras/MRAS and the catalytic subunit of protein phosphatase 1 (either PPP1CA, PPP1CB or PPP1CC). SHOC2 and PP1c preferably bind M-Ras/MRAS, but they also bind K-Ras/KRAS, N-Ras/NRAS and H-Ras/HRAS; these interactions are GTP-dependent and both SHOC2 and PP1c are required to form a stable complex. Interacts with SHOC2 in the absence of Ras GTPases. Mn(2+) serves as cofactor. Phosphorylated by NEK2.

It is found in the cytoplasm. Its subcellular location is the nucleus. The protein localises to the cleavage furrow. It localises to the nucleolus. The protein resides in the nucleoplasm. It is found in the chromosome. Its subcellular location is the centromere. The protein localises to the kinetochore. It localises to the nucleus speckle. The protein resides in the midbody. It is found in the mitochondrion. Its subcellular location is the cytoskeleton. The protein localises to the microtubule organizing center. It carries out the reaction O-phospho-L-seryl-[protein] + H2O = L-seryl-[protein] + phosphate. The enzyme catalyses O-phospho-L-threonyl-[protein] + H2O = L-threonyl-[protein] + phosphate. With respect to regulation, inactivated by binding to URI1. Functionally, protein phosphatase that associates with over 200 regulatory proteins to form highly specific holoenzymes which dephosphorylate hundreds of biological targets. Protein phosphatase 1 (PP1) is essential for cell division, and participates in the regulation of glycogen metabolism, muscle contractility and protein synthesis. Dephosphorylates RPS6KB1. Involved in regulation of ionic conductances and long-term synaptic plasticity. May play an important role in dephosphorylating substrates such as the postsynaptic density-associated Ca(2+)/calmodulin dependent protein kinase II. Component of the PTW/PP1 phosphatase complex, which plays a role in the control of chromatin structure and cell cycle progression during the transition from mitosis into interphase. Regulates the recruitment of the SKA complex to kinetochores. Core component of the SHOC2-MRAS-PP1c (SMP) holophosphatase complex that regulates the MAPK pathway activation. Dephosphorylates MKI67 at the onset of anaphase. The SMP complex specifically dephosphorylates the inhibitory phosphorylation at 'Ser-259' of RAF1 kinase, 'Ser-365' of BRAF kinase and 'Ser-214' of ARAF kinase, stimulating their kinase activities. The SMP complex enhances the dephosphorylation activity and substrate specificity of PP1c. The polypeptide is Serine/threonine-protein phosphatase PP1-gamma catalytic subunit (PPP1CC) (Canis lupus familiaris (Dog)).